The chain runs to 199 residues: Recombination protein RecR (199 aa).

The C4-type zinc-finger motif lies at 58–73; it reads CSTCNNLTDKDPCTIC. A Toprim domain is found at 81–176; that stretch reads NLICVVQDAR…RVTRLAYGLP (96 aa).

The protein belongs to the RecR family.

In terms of biological role, may play a role in DNA repair. It seems to be involved in an RecBC-independent recombinational process of DNA repair. It may act with RecF and RecO. The protein is Recombination protein RecR of Natranaerobius thermophilus (strain ATCC BAA-1301 / DSM 18059 / JW/NM-WN-LF).